Here is a 417-residue protein sequence, read N- to C-terminus: Tyrosine--tRNA ligase (417 aa).

Residue Y39 participates in L-tyrosine binding. The short motif at 44–53 (PTAPSLHAGG) is the 'HIGH' region element. Y176 and Q180 together coordinate L-tyrosine. Residues 236-240 (KMGKS) carry the 'KMSKS' region motif. K239 lines the ATP pocket. The S4 RNA-binding domain occupies 350 to 417 (IGVLALMVLA…KKRHVLIRPA (68 aa)).

This sequence belongs to the class-I aminoacyl-tRNA synthetase family. TyrS type 1 subfamily. As to quaternary structure, homodimer.

The protein resides in the cytoplasm. It catalyses the reaction tRNA(Tyr) + L-tyrosine + ATP = L-tyrosyl-tRNA(Tyr) + AMP + diphosphate + H(+). In terms of biological role, catalyzes the attachment of tyrosine to tRNA(Tyr) in a two-step reaction: tyrosine is first activated by ATP to form Tyr-AMP and then transferred to the acceptor end of tRNA(Tyr). This Brucella suis biovar 1 (strain 1330) protein is Tyrosine--tRNA ligase.